A 243-amino-acid chain; its full sequence is Probable transcriptional regulatory protein BH0025 (243 aa).

The protein belongs to the TACO1 family.

It is found in the cytoplasm. This Borrelia hermsii (strain HS1 / DAH) protein is Probable transcriptional regulatory protein BH0025.